Reading from the N-terminus, the 685-residue chain is Translation factor GUF1 homolog, mitochondrial (685 aa).

The N-terminal 54 residues, 1-54 (MFSRLLNRGNGGVNKNITSGLLLRRTTTTTTRLSYINNSPTLSIRSFCSKSTTI), are a transit peptide targeting the mitochondrion. The tr-type G domain maps to 68 to 267 (DRIRNFSIIA…AVIDRIPPPQ (200 aa)). GTP contacts are provided by residues 77–84 (AHIDHGKT), 160–164 (DTPGH), and 214–217 (NKID).

Belongs to the TRAFAC class translation factor GTPase superfamily. Classic translation factor GTPase family. LepA subfamily.

It is found in the mitochondrion inner membrane. The enzyme catalyses GTP + H2O = GDP + phosphate + H(+). In terms of biological role, promotes mitochondrial protein synthesis. May act as a fidelity factor of the translation reaction, by catalyzing a one-codon backward translocation of tRNAs on improperly translocated ribosomes. Binds to mitochondrial ribosomes in a GTP-dependent manner. In Dictyostelium discoideum (Social amoeba), this protein is Translation factor GUF1 homolog, mitochondrial (guf1).